A 235-amino-acid chain; its full sequence is Homeobox protein Nkx-2.8 (235 aa).

The span at 51–67 shows a compositional bias: polar residues; it reads SDESGLETSPADSSQLA. A disordered region spans residues 51-86; it reads SDESGLETSPADSSQLASLRRESPGSDPEKRRKRRV. Basic and acidic residues predominate over residues 69–80; that stretch reads LRRESPGSDPEK. A DNA-binding region (homeobox) is located at residues 81–140; the sequence is RRKRRVLFSKAQTLELERRFRQQRYLSAPEREQLARLLRLTPTQVKIWFQNHRYKLKRGR.

It belongs to the NK-2 homeobox family. Prominent expression in ventral brain and neural tube structures.

It is found in the nucleus. Functionally, possible role in the specification of a distinct subset of neurons. The polypeptide is Homeobox protein Nkx-2.8 (Nkx2-8) (Mus musculus (Mouse)).